A 670-amino-acid chain; its full sequence is Septation protein 7 (670 aa).

One can recognise a Septin-type G domain in the interval 33–357; it reads KGIKFTFMVV…ETYRTERLTK (325 aa). The interval 43–50 is G1 motif; that stretch reads GESGTGKT. Residues 43 to 50, G137, 217 to 225, and R306 each bind GTP; these read GESGTGKT and KADSFTLNE. The interval 134 to 137 is G3 motif; it reads DTPG. The G4 motif stretch occupies residues 216 to 219; the sequence is GKAD. Disordered stretches follow at residues 383–513 and 574–670; these read LNDS…QRNQ and LNRQ…VSNH. Residues 395-404 show a composition bias toward low complexity; it reads NNNNNNNNNN. The span at 405 to 421 shows a compositional bias: polar residues; it reads ASTIPSMSNLAQLTTST. Composition is skewed to low complexity over residues 433 to 446 and 463 to 473; these read SITS…KSTS and SSFTSSTSTVS. Positions 472 to 606 form a coiled coil; sequence VSLEGGEKEG…SVQSGGVDDG (135 aa). Basic and acidic residues predominate over residues 476 to 487; the sequence is GGEKEGGHHDRG. A compositionally biased stretch (low complexity) spans 489–500; the sequence is NSTSTNNNNNNN. Residues 631–645 show a composition bias toward basic and acidic residues; that stretch reads QSHEYDNSEYHHDDS.

It belongs to the TRAFAC class TrmE-Era-EngA-EngB-Septin-like GTPase superfamily. Septin GTPase family. In terms of assembly, component of the septin complex which consists of CDC3, CDC10, CDC11, CDC12 and probably SEP7. The purified septin complex appeared to have a stoichiometry of 2 CDC3, 1 to 2 CDC10, 1 CDC11, 2 CDC12, and 1 or none SEP7 subunit. Induction of hyphal growth brings about important modifications in septin ring dynamics, because the rings were found in a different state from those of yeast cells. This hyphal-specific state contains a core of stable septins (SEP7, CDC3, and CDC12), and it shows a high CDC10 turnover between the ring and the cytoplasm. Interacts with GIN4. Phosphorylated by GIN4 which stabilizes the GIN4-SEP7 interaction.

Its subcellular location is the bud neck. In terms of biological role, septins are GTPases involved in cytokinesis that assemble early in the cell cycle as a patch at the incipient bud site and form a ring before bud emergence, which transforms into an hour-glass shaped collar of cortical filaments that spans both sides of the mother-bud neck. This collar persists until just before cytokinesis, when it splits into two rings that occupy opposite sides of the neck. The septins at the bud neck serve as a structural scaffold that recruits different components involved in diverse processes at specific stages during the cell cycle. Many proteins bind asymmetrically to the septin collar. The septin assembly is regulated by protein kinase GIN4. Septins are also involved in cell morphogenesis, chlamydospores morphogenesis, bud site selection, chitin deposition, cell cycle regulation, cell compartmentalization and spore wall formation. SEP7 is required to convert hyphal septin rings into the hyphal-specific state and is necessary for CDC10 turnover during hyphal growth. The chain is Septation protein 7 (SEP7) from Candida albicans (strain SC5314 / ATCC MYA-2876) (Yeast).